A 427-amino-acid polypeptide reads, in one-letter code: Glutamate-1-semialdehyde 2,1-aminomutase (427 aa).

Position 265 is an N6-(pyridoxal phosphate)lysine (Lys-265).

This sequence belongs to the class-III pyridoxal-phosphate-dependent aminotransferase family. HemL subfamily. As to quaternary structure, homodimer. It depends on pyridoxal 5'-phosphate as a cofactor.

It is found in the cytoplasm. The catalysed reaction is (S)-4-amino-5-oxopentanoate = 5-aminolevulinate. Its pathway is porphyrin-containing compound metabolism; protoporphyrin-IX biosynthesis; 5-aminolevulinate from L-glutamyl-tRNA(Glu): step 2/2. The sequence is that of Glutamate-1-semialdehyde 2,1-aminomutase from Pseudomonas putida (strain GB-1).